A 542-amino-acid polypeptide reads, in one-letter code: 2,3-bisphosphoglycerate-independent phosphoglycerate mutase (542 aa).

2 residues coordinate Mn(2+): aspartate 13 and serine 63. Serine 63 functions as the Phosphoserine intermediate in the catalytic mechanism. Substrate contacts are provided by residues histidine 124, 154–155 (RD), arginine 186, arginine 192, 263–266 (RADR), and lysine 357. The Mn(2+) site is built by aspartate 424, histidine 428, aspartate 465, histidine 466, and histidine 484.

This sequence belongs to the BPG-independent phosphoglycerate mutase family. In terms of assembly, monomer. It depends on Mn(2+) as a cofactor.

It carries out the reaction (2R)-2-phosphoglycerate = (2R)-3-phosphoglycerate. Its pathway is carbohydrate degradation; glycolysis; pyruvate from D-glyceraldehyde 3-phosphate: step 3/5. Catalyzes the interconversion of 2-phosphoglycerate and 3-phosphoglycerate. The sequence is that of 2,3-bisphosphoglycerate-independent phosphoglycerate mutase from Herpetosiphon aurantiacus (strain ATCC 23779 / DSM 785 / 114-95).